Here is a 682-residue protein sequence, read N- to C-terminus: Penicillin-binding protein activator LpoA (682 aa).

Residues 1-26 (MLPLNSVRTHAGRLVPVMLAALFLAG) form the signal peptide. The N-palmitoyl cysteine moiety is linked to residue Cys-27. The S-diacylglycerol cysteine moiety is linked to residue Cys-27. Disordered regions lie at residues 240 to 262 (AKQL…TGET) and 314 to 341 (ANNA…VSPT). Over residues 248–262 (GGTPPAAAAPTTGET) the composition is skewed to low complexity.

This sequence belongs to the LpoA family. Interacts with PBP1a.

It is found in the cell outer membrane. Regulator of peptidoglycan synthesis that is essential for the function of penicillin-binding protein 1A (PBP1a). The sequence is that of Penicillin-binding protein activator LpoA from Dickeya chrysanthemi (strain Ech1591) (Dickeya zeae (strain Ech1591)).